The sequence spans 117 residues: Immunoglobulin kappa variable 1-17 (117 aa).

Positions 1–22 (MDMRVPAQLLGLLLLWFPGARC) are cleaved as a signal peptide. The interval 23-45 (DIQMTQSPSSLSASVGDRVTITC) is framework-1. The region spanning 24–117 (IQMTQSPSSL…YYCLQHNSYP (94 aa)) is the Ig-like domain. A disulfide bond links Cys-45 and Cys-110. The interval 46 to 56 (RASQGIRNDLG) is complementarity-determining-1. Residues 57–71 (WYQQKPGKAPKRLIY) form a framework-2 region. Positions 72-78 (AASSLQS) are complementarity-determining-2. A framework-3 region spans residues 79-110 (GVPSRFSGSGSGTEFTLTISSLQPEDFATYYC). A complementarity-determining-3 region spans residues 111–117 (LQHNSYP).

In terms of assembly, immunoglobulins are composed of two identical heavy chains and two identical light chains; disulfide-linked.

Its subcellular location is the secreted. It is found in the cell membrane. Its function is as follows. V region of the variable domain of immunoglobulin light chains that participates in the antigen recognition. Immunoglobulins, also known as antibodies, are membrane-bound or secreted glycoproteins produced by B lymphocytes. In the recognition phase of humoral immunity, the membrane-bound immunoglobulins serve as receptors which, upon binding of a specific antigen, trigger the clonal expansion and differentiation of B lymphocytes into immunoglobulins-secreting plasma cells. Secreted immunoglobulins mediate the effector phase of humoral immunity, which results in the elimination of bound antigens. The antigen binding site is formed by the variable domain of one heavy chain, together with that of its associated light chain. Thus, each immunoglobulin has two antigen binding sites with remarkable affinity for a particular antigen. The variable domains are assembled by a process called V-(D)-J rearrangement and can then be subjected to somatic hypermutations which, after exposure to antigen and selection, allow affinity maturation for a particular antigen. This is Immunoglobulin kappa variable 1-17 from Homo sapiens (Human).